Reading from the N-terminus, the 147-residue chain is Large ribosomal subunit protein uL15 (147 aa).

Positions 20-54 are disordered; that stretch reads GRGIGSGKGKTSGKGHKGQKARGTGKVHPWFEGGQ. The span at 30–44 shows a compositional bias: basic residues; the sequence is TSGKGHKGQKARGTG.

The protein belongs to the universal ribosomal protein uL15 family. Part of the 50S ribosomal subunit.

Functionally, binds to the 23S rRNA. The chain is Large ribosomal subunit protein uL15 from Thermosipho africanus (strain TCF52B).